A 389-amino-acid polypeptide reads, in one-letter code: Cytochrome b (389 aa).

A run of 4 helical transmembrane segments spans residues 32 to 52 (FGSL…FLAM), 76 to 98 (WIVR…AHIG), 113 to 133 (LWSI…LGYV), and 179 to 199 (FFSL…AHFM). 2 residues coordinate heme b: H82 and H96. Positions 183 and 197 each coordinate heme b. An a ubiquinone-binding site is contributed by H202. 4 helical membrane-spanning segments follow: residues 225–245 (FIFK…VIVF), 289–309 (LLGV…PLTD), 321–341 (AMKF…WLGS), and 348–368 (YLEI…VIVP).

This sequence belongs to the cytochrome b family. In terms of assembly, fungal cytochrome b-c1 complex contains 10 subunits; 3 respiratory subunits, 2 core proteins and 5 low-molecular weight proteins. Cytochrome b-c1 complex is a homodimer. The cofactor is heme b.

Its subcellular location is the mitochondrion inner membrane. Component of the ubiquinol-cytochrome c reductase complex (complex III or cytochrome b-c1 complex) that is part of the mitochondrial respiratory chain. The b-c1 complex mediates electron transfer from ubiquinol to cytochrome c. Contributes to the generation of a proton gradient across the mitochondrial membrane that is then used for ATP synthesis. The chain is Cytochrome b (COB) from Strobilurus tenacellus.